Consider the following 357-residue polypeptide: Glutamine synthetase cytosolic isozyme 1-2 (357 aa).

The GS beta-grasp domain occupies 19-99; it reads IIAEYIWVGG…VMCDCYTPQG (81 aa). The region spanning 106–357 is the GS catalytic domain; it reads KRHSAAKIFS…AETTLLWKQN (252 aa).

The protein belongs to the glutamine synthetase family. In terms of assembly, homooctamer. As to expression, expressed in roots and at lower levels in leaf blades and spikelets (rice flower).

Its subcellular location is the cytoplasm. It catalyses the reaction L-glutamate + NH4(+) + ATP = L-glutamine + ADP + phosphate + H(+). In terms of biological role, high-affinity glutamine synthetase involved in ammonium assimilation. Plays an important role in the primary assimilation of ammonium taken up by roots. Plays a role in maintaining nitrogen metabolic balance during ammonium assimilation, thus controlling plant growth and development. Reassimilates ammonium generated during lignification within developing tillers, which is probably required for the outgrowth of axillary buds. Required for nitrogen-dependent biosynthesis of cytokinin. Active cytokinin in axillary bud meristem is required for axillary bud outgrowth and necessary for tillering. The sequence is that of Glutamine synthetase cytosolic isozyme 1-2 from Oryza sativa subsp. japonica (Rice).